We begin with the raw amino-acid sequence, 215 residues long: uncharacterized protein (215 aa).

It belongs to the mimivirus L31/R44 family.

This is an uncharacterized protein from Acanthamoeba polyphaga (Amoeba).